We begin with the raw amino-acid sequence, 1237 residues long: Tyrosine-protein kinase sid-3 (1237 aa).

In terms of domain architecture, Protein kinase spans 107-369; sequence IKLYELIGEG…REDLVAAMFL (263 aa). ATP is bound by residues 113-121 and Lys139; that span reads IGEGSFAVV. The active-site Proton acceptor is Asp230. Residues 366-426 enclose the SH3 domain; it reads AMFLDAVARE…PRSVVFAQTN (61 aa). Disordered stretches follow at residues 683–704, 741–802, 826–919, 940–986, 999–1018, and 1134–1156; these read NQGSSTGNGVRPRPASSIGIQN, PPAP…APVQ, IQPQ…EERR, SNST…SEPI, SATTSQAKPVTQPIRHPSPP, and QQRQAGSSSRAVPPASASTSAAS. Polar residues-rich tracts occupy residues 749-766, 778-791, and 847-863; these read QPVSSQRVAQQQQNTLQK, KRPTGTTAPPSNGF, and SAPTHSNVAPTTSSQAS. 2 stretches are compositionally biased toward low complexity: residues 881–910 and 940–961; these read TPITVAPVHAAPTTSAPSTSVVTRRPTSTT and SNSTSSLPSAAVSTASSVPSTA. The segment covering 1138–1156 has biased composition (low complexity); sequence AGSSSRAVPPASASTSAAS.

This sequence belongs to the protein kinase superfamily. Tyr protein kinase family. SYK/ZAP-70 subfamily. In terms of tissue distribution, ubiquitously present in all tissues tested. Expressed in the somatic cells of gut, pharynx, body wall muscle, neurons, skin and excretory canal cells.

The protein resides in the cytoplasm. The enzyme catalyses L-tyrosyl-[protein] + ATP = O-phospho-L-tyrosyl-[protein] + ADP + H(+). In terms of biological role, tyrosine-protein kinase which plays a role in RNA-mediated gene silencing by mediating import of double-stranded RNA (dsRNA) into cells. Not required for import of ingested dsRNA into intestinal cells but involved in subsequent export from intestinal cells to internal tissues. The chain is Tyrosine-protein kinase sid-3 (sid-3) from Caenorhabditis elegans.